The following is a 62-amino-acid chain: Cecropin-D (62 aa).

A signal peptide spans 1 to 22 (MNFTKILFFVVACVFAMRTVSA). The propeptide at 23–24 (AP) is removed by a dipeptidylpeptidase. Lys60 carries the post-translational modification Lysine amide.

It belongs to the cecropin family.

The protein resides in the secreted. Cecropins have lytic and antibacterial activity against several Gram-positive and Gram-negative bacteria. In Hyalophora cecropia (Cecropia moth), this protein is Cecropin-D.